We begin with the raw amino-acid sequence, 185 residues long: GTP cyclohydrolase 1 (185 aa).

The Zn(2+) site is built by cysteine 76, histidine 79, and cysteine 147.

This sequence belongs to the GTP cyclohydrolase I family. Toroid-shaped homodecamer, composed of two pentamers of five dimers.

It carries out the reaction GTP + H2O = 7,8-dihydroneopterin 3'-triphosphate + formate + H(+). The protein operates within cofactor biosynthesis; 7,8-dihydroneopterin triphosphate biosynthesis; 7,8-dihydroneopterin triphosphate from GTP: step 1/1. This Clostridium perfringens (strain 13 / Type A) protein is GTP cyclohydrolase 1.